We begin with the raw amino-acid sequence, 110 residues long: Multidrug transporter PA4990 (110 aa).

Transmembrane regions (helical) follow at residues 7 to 27 (LAIA…VAGF), 31 to 51 (LPLL…VLVM), 58 to 78 (VVYA…AMFV), and 85 to 105 (PAAL…QLFS).

Belongs to the drug/metabolite transporter (DMT) superfamily. Small multidrug resistance (SMR) (TC 2.A.7.1) family.

Its subcellular location is the cell membrane. Functionally, confers resistance to ethidium bromide, acriflavine and methyl viologen. This Pseudomonas aeruginosa (strain ATCC 15692 / DSM 22644 / CIP 104116 / JCM 14847 / LMG 12228 / 1C / PRS 101 / PAO1) protein is Multidrug transporter PA4990.